Consider the following 175-residue polypeptide: Transcription factor HES-3 (175 aa).

In terms of domain architecture, bHLH spans 1–49; it reads MEKKRRARINVSLEQLRSLLERHYSHQIRKRKLEKADILELSVKYMRSL. Residues 65–98 form the Orange domain; the sequence is YPSGFQGGLRGVSQRLRPGEGDSGLRCPLLLQRR. The interval 126-166 is disordered; sequence RAAGGSHSPQSPLPLPGGLLESSTDVVAPHPASNCQAESTR. Positions 129–148 are enriched in low complexity; that stretch reads GGSHSPQSPLPLPGGLLESS. Positions 172–175 match the WRPW motif motif; sequence WRPW.

As to quaternary structure, transcription repression requires formation of a complex with a corepressor protein of the Groucho/TLE family.

The protein resides in the nucleus. Transcriptional repressor of genes that require a bHLH protein for their transcription. The protein is Transcription factor HES-3 (Hes3) of Mus musculus (Mouse).